Reading from the N-terminus, the 428-residue chain is Exodeoxyribonuclease 7 large subunit (428 aa).

The protein belongs to the XseA family. In terms of assembly, heterooligomer composed of large and small subunits.

The protein resides in the cytoplasm. It carries out the reaction Exonucleolytic cleavage in either 5'- to 3'- or 3'- to 5'-direction to yield nucleoside 5'-phosphates.. Functionally, bidirectionally degrades single-stranded DNA into large acid-insoluble oligonucleotides, which are then degraded further into small acid-soluble oligonucleotides. The protein is Exodeoxyribonuclease 7 large subunit of Mycobacterium leprae (strain TN).